Here is a 385-residue protein sequence, read N- to C-terminus: tRNA-specific 2-thiouridylase MnmA (385 aa).

Residues 30–37 (GMSGGVDS) and Met56 each bind ATP. An interaction with target base in tRNA region spans residues 118–120 (NPD). The active-site Nucleophile is the Cys123. Residues Cys123 and Cys220 are joined by a disulfide bond. Gly148 provides a ligand contact to ATP. The segment at 170–172 (KDQ) is interaction with tRNA. Residue Cys220 is the Cysteine persulfide intermediate of the active site. Residues 332 to 333 (RY) form an interaction with tRNA region.

The protein belongs to the MnmA/TRMU family.

It localises to the cytoplasm. It catalyses the reaction S-sulfanyl-L-cysteinyl-[protein] + uridine(34) in tRNA + AH2 + ATP = 2-thiouridine(34) in tRNA + L-cysteinyl-[protein] + A + AMP + diphosphate + H(+). Catalyzes the 2-thiolation of uridine at the wobble position (U34) of tRNA, leading to the formation of s(2)U34. The sequence is that of tRNA-specific 2-thiouridylase MnmA from Haemophilus influenzae (strain PittGG).